The following is a 517-amino-acid chain: MTVMVSRIEYIGQIVRGEATVIWILVALVLVAYLILPNPTYRTNVKVPTVRYLGGWMPDLVDRLFFNTKATSVIYDGYKQYKKKAYKVLKADGDLVVLSTRYAEELRQLPASTLNALEATFTDHVGDYTTILTDSHLHTETIQKRLTPAIGRLIPRIISELDHAYEVEFPKCDGKWVAINPYEVFLRLVARVGARIFIGDTLCRDEQWLKASIDYTKNIFVTIALLRPVPGFLQPLVGRVLPSSRSLNHQLAYIKNEFLGPLIEKRREMESSGDPNYEKPDDFLQWMMDLAKTEQESHPHNLAQRLLGITSMAVVHTSAMSLTHILYDLLVMPQWLQPLRDEIQEVNPDWHSTTQAHLIGLKGMDSFLKESQRFNPPGELSFHRVVKHDLTLSDGLFLPKGTHICMAAGPISRDADVMSDPDTFDAFRFVKENRPTSGFVSTGATNMHFGLGRYACPGRFFAAFVMKAILSRFLADYDFRFGPDQKDRPKNMMIGDKIVPNVSTPIFIRKRTTSKPL.

The chain crosses the membrane as a helical span at residues 17–37; the sequence is GEATVIWILVALVLVAYLILP. Cys456 lines the heme pocket. The N-linked (GlcNAc...) asparagine glycan is linked to Asn501.

It belongs to the cytochrome P450 family. Heme serves as cofactor.

The protein localises to the membrane. The protein operates within secondary metabolite biosynthesis. In terms of biological role, cytochrome P450 monooxygenase; part of the gene cluster that mediates the biosynthesis of the indole diterpenes penitrems. The geranylgeranyl diphosphate (GGPP) synthase penG catalyzes the first step in penitrem biosynthesis via conversion of farnesyl pyrophosphate and isopentyl pyrophosphate into geranylgeranyl pyrophosphate (GGPP). Condensation of indole-3-glycerol phosphate with GGPP by the prenyl transferase penC then forms 3-geranylgeranylindole (3-GGI). Epoxidation by the FAD-dependent monooxygenase penM leads to a epoxidized-GGI that is substrate of the terpene cyclase penB for cyclization to yield paspaline. Paspaline is subsequently converted to 13-desoxypaxilline by the cytochrome P450 monooxygenase penP, the latter being then converted to paxilline by the cytochrome P450 monooxygenase penQ. Paxilline is converted to beta-paxitriol via C-10 ketoreduction by the short-chain dehydrogenase PC-15 which can be monoprenylated at the C-20 by the indole diterpene prenyltransferase penD. A two-step elimination (acetylation and elimination) process performed by the O-acetyltransferase PC-16 and the P.simplicissimum ptmI-ortholog not yet identified in P.crustosum, leads to the production of the prenylated form of penijanthine. The FAD-linked oxidoreductase ptmO then converts the prenylated form of penijanthine into PC-M5 which is in turn transformed into PC-M4 by the aromatic dimethylallyltransferase PC-22. A series of oxidation steps involving 4 cytochrome P450 monooxygenases (PC-21, PC-05, PC-23, PC-20) and a FAD-dependent monooxygenase (PC-14) are required for the transformation of PC-M4 to penitrems A and E. Synthesis of these final products is proposed to proceed via penitrems D and C (PC-21, PC-05, PC-14) and penitrems B and F (PC-21, PC-05, PC-14, PC-23). This chain is Cytochrome P450 monooxygenase penP, found in Penicillium crustosum (Blue mold fungus).